The chain runs to 301 residues: UstYa family oxidase phomYd (301 aa).

A disordered region spans residues 1-26; it reads MEKFFSPSRHNYADLSPTDVPASEES. The chain crosses the membrane as a helical span at residues 47-69; sequence VLVNRLLAASTVALVMVSLWLGW. Short sequence motifs (HXXHC) lie at residues 189–194 and 218–222; these read THSVHC and HTDHC. N-linked (GlcNAc...) asparagine glycosylation is present at Asn-275.

Belongs to the ustYa family.

It is found in the membrane. The protein operates within mycotoxin biosynthesis. UstYa family oxidase; part of the gene cluster that mediates the biosynthesis of the phomopsins, a group of hexapeptide mycotoxins which infects lupins and causes lupinosis disease in livestock. Within the pathway, phomYd catalyzes the desaturation of the Asp moiety into 2,3-dehydroaspartic acid (dAsp). The pathway starts with the processing of the precursor phomA by several endopeptidases including kexin proteases as well as the cluster-specific S41 family peptidase phomP1 and the oligopeptidase phomG to produce 10 identical copies of the hexapeptide Tyr-Val-Ile-Pro-Ile-Asp. After being excised from the precursor peptide, the core peptides are cyclized and modified post-translationally by enzymes encoded within the gene cluster. The timing and order of proteolysis of the phomA precursor and PTMs are still unknown. Two tyrosinase-like enzymes, phomQ1 and phomQ2, catalyze the chlorination and hydroxylation of Tyr, respectively. PhomYb, is proposed to be involved in the construction of the macrocyclic structure. The other 4 ustYa family proteins may be involved in PTMs that generate the unique structure of phomopsin A. PhomYa is required for the hydroxylation of C-beta of Tyr. PhomYc, phomYd, and phomYe are responsible for the biosynthesis of 2,3-dehydroisoleucine (dIle), 2,3-dehydroaspartic acid (dAsp), and 3,4-dehydroproline (dPro), respectively. While dIle formation by phomYc is indispensable for the installation of dAsp by phomYd, the order of the other PTMs have not been elucidated yet. Most of the biosynthetic enzymes likely have broad substrate specificity, and thus, there might be a metabolic grid from a precursor to phomopsin A. The enzyme(s) responsible for the biosynthesis of 3,4-dehydrovaline (dVal) have also not been identified yet. Finally, phomM acts as an S-adenosylmethionine-dependent alpha-N-methyltransferase that catalyzes two successive N-methylation reactions, converting N-desmethyl-phomopsin A to phomopsin A and phomopsin A further to an N,N-dimethylated congener called phomopsin E. In Diaporthe leptostromiformis (Lupinosis disease fungus), this protein is UstYa family oxidase phomYd.